The chain runs to 266 residues: Glucosamine-6-phosphate deaminase (266 aa).

The active-site Proton acceptor; for enolization step is the D72. D141 acts as the For ring-opening step in catalysis. H143 (proton acceptor; for ring-opening step) is an active-site residue. The active-site For ring-opening step is the E148.

The protein belongs to the glucosamine/galactosamine-6-phosphate isomerase family. NagB subfamily. As to quaternary structure, homohexamer.

The enzyme catalyses alpha-D-glucosamine 6-phosphate + H2O = beta-D-fructose 6-phosphate + NH4(+). Its pathway is amino-sugar metabolism; N-acetylneuraminate degradation; D-fructose 6-phosphate from N-acetylneuraminate: step 5/5. Allosterically activated by N-acetylglucosamine 6-phosphate (GlcNAc6P). Its function is as follows. Catalyzes the reversible isomerization-deamination of glucosamine 6-phosphate (GlcN6P) to form fructose 6-phosphate (Fru6P) and ammonium ion. This Aliivibrio fischeri (strain ATCC 700601 / ES114) (Vibrio fischeri) protein is Glucosamine-6-phosphate deaminase.